Reading from the N-terminus, the 125-residue chain is Protein Bouncer (125 aa).

Positions 1 to 18 (MGCVLLFLLLVCVPVVLP) are cleaved as a signal peptide. Disulfide bonds link cysteine 23/cysteine 48, cysteine 26/cysteine 35, cysteine 42/cysteine 66, cysteine 72/cysteine 91, and cysteine 92/cysteine 97. The UPAR/Ly6 domain maps to 23–98 (CLFCPVTSLN…FSCCGGHYCN (76 aa)). Asparagine 32 carries N-linked (GlcNAc...) asparagine glycosylation. Asparagine 84 carries N-linked (GlcNAc...) asparagine glycosylation. Asparagine 98 carries GPI-anchor amidated asparagine lipidation. Positions 99–125 (SQPRAEPGGRLLLLLLPAAALTAAGAL) are cleaved as a propeptide — removed in mature form.

Belongs to the SPACA4/bouncer family. Interacts with spermatocyte complex composed of izumo1, spaca6 and tmem81. In terms of processing, N-glycosylated. Highly expressed in oocytes. Not expressed in testis.

The protein localises to the cell membrane. Its function is as follows. Oocyte-expressed fertilization factor that mediates sperm-egg binding and is essential for sperm entry into the egg. Necessary and sufficient to mediate species-specific gamete recognition and fertilization, which is essential for vertebrate species performing external fertilization. External fertilization cannot guarantee that only conspecific sperm reaches the egg by precopulatory mate choice: proteins such as Bouncer can therefore support the selection of conspecific sperm. The polypeptide is Protein Bouncer (Danio rerio (Zebrafish)).